The following is a 493-amino-acid chain: E3 ubiquitin-protein ligase Hakai (493 aa).

Disordered stretches follow at residues 1-20 (MDHN…LGGL) and 28-61 (IKLI…GDEE). Over residues 7–16 (DLQGTNSSAS) the composition is skewed to polar residues. The segment at 109 to 149 (CDKCGLPIKMYGRMIPCKHVFCYDCAILHEKKGDKMCPGCN) adopts an RING-type zinc-finger fold. The HYB domain stretch occupies residues 148–206 (CNEPVQRIEQCVRGSLFMCSIVQGCKRTYLSQRDLQAHINHRHMRAGKPVTRPPLEPVH). Residues 164-190 (FMCSIVQGCKRTYLSQRDLQAHINHRH) form a C2H2-type zinc finger. Residues 253-493 (YNQPHEDIRP…DQARYRPYYQ (241 aa)) are disordered. Pro residues-rich tracts occupy residues 262-276 (PPPA…PPRP), 342-352 (APPPPPPPPIS), 372-389 (APPP…PPPG), and 399-412 (MNHP…PQHG). The span at 427–444 (NPNSLPQFSEDQGTLSPP) shows a compositional bias: polar residues. Positions 459–469 (PRGPPPPPRMQ) are enriched in pro residues. Positions 470–480 (GPPAQAPLAGP) are enriched in low complexity.

The protein belongs to the Hakai family. In terms of assembly, homodimer. Interacts with tyrosine-phosphorylated SRC substrates. Component of the WMM complex, a N6-methyltransferase complex composed of a catalytic subcomplex, named MAC, and of an associated subcomplex, named MACOM. Component of the MACOM subcomplex.

The protein resides in the nucleus speckle. It localises to the nucleus. Its subcellular location is the nucleoplasm. The enzyme catalyses S-ubiquitinyl-[E2 ubiquitin-conjugating enzyme]-L-cysteine + [acceptor protein]-L-lysine = [E2 ubiquitin-conjugating enzyme]-L-cysteine + N(6)-ubiquitinyl-[acceptor protein]-L-lysine.. Its pathway is protein modification; protein ubiquitination. Functionally, E3 ubiquitin-protein ligase that mediates ubiquitination of several tyrosine-phosphorylated Src substrates. Associated component of the WMM complex, a complex that mediates N6-methyladenosine (m6A) methylation of RNAs, a modification that plays a role in the efficiency of mRNA splicing and RNA processing. The protein is E3 ubiquitin-protein ligase Hakai of Gallus gallus (Chicken).